A 302-amino-acid polypeptide reads, in one-letter code: Sulfate adenylyltransferase subunit 2 (302 aa).

The protein belongs to the PAPS reductase family. CysD subfamily. As to quaternary structure, heterodimer composed of CysD, the smaller subunit, and CysN.

It catalyses the reaction sulfate + ATP + H(+) = adenosine 5'-phosphosulfate + diphosphate. The protein operates within sulfur metabolism; hydrogen sulfide biosynthesis; sulfite from sulfate: step 1/3. With CysN forms the ATP sulfurylase (ATPS) that catalyzes the adenylation of sulfate producing adenosine 5'-phosphosulfate (APS) and diphosphate, the first enzymatic step in sulfur assimilation pathway. APS synthesis involves the formation of a high-energy phosphoric-sulfuric acid anhydride bond driven by GTP hydrolysis by CysN coupled to ATP hydrolysis by CysD. In Escherichia coli O1:K1 / APEC, this protein is Sulfate adenylyltransferase subunit 2.